We begin with the raw amino-acid sequence, 515 residues long: Maturase K (515 aa).

This sequence belongs to the intron maturase 2 family. MatK subfamily.

The protein resides in the plastid. It is found in the chloroplast. Functionally, usually encoded in the trnK tRNA gene intron. Probably assists in splicing its own and other chloroplast group II introns. This is Maturase K from Pinus luchuensis (Ryukyu island pine).